The sequence spans 97 residues: MPSQMEHAMETLMFTFHKYAGDKNYLSKEDLRALMEKEFPGFLENQRDPMALDKIMKDLDQCRDGKVGFQSFFSLVAGLTIACNDYFVVHMKQKGRK.

The EF-hand domain occupies arginine 47–alanine 82. The ancestral calcium site stretch occupies residues aspartate 60–serine 71.

This sequence belongs to the S-100 family. Heterotetramer containing 2 light chains of S100A10/p11 and 2 heavy chains of ANXA2/p36.

Its function is as follows. Because S100A10 induces the dimerization of ANXA2/p36, it may function as a regulator of protein phosphorylation in that the ANXA2 monomer is the preferred target (in vitro) of tyrosine-specific kinase. The chain is Protein S100-A10 (S100A10) from Gallus gallus (Chicken).